The primary structure comprises 240 residues: Aquaporin Z (240 aa).

Transmembrane regions (helical) follow at residues 10–30 and 35–55; these read MIGTFWLTFAGCGSAVIAAGF and IGLVGVSLAFGLSVVTMAYAI. An NPA 1 motif is present at residues 64 to 66; it reads NPA. Helical transmembrane passes span 90–110, 131–151, and 160–180; these read VLGAIAAAALLYLIASGAAGF, LVACFVMEVVMTMMFLFVIMG, and GFAPLAIGLALVMIHLVSIPV. Residues 186–188 carry the NPA 2 motif; that stretch reads NPA. A helical transmembrane segment spans residues 202–222; the sequence is IGQLWLFWVAPLLGGVLGGVI.

Belongs to the MIP/aquaporin (TC 1.A.8) family. As to quaternary structure, homotetramer.

Its subcellular location is the cell inner membrane. The catalysed reaction is H2O(in) = H2O(out). Its function is as follows. Channel that permits osmotically driven movement of water in both directions. It is involved in the osmoregulation and in the maintenance of cell turgor during volume expansion in rapidly growing cells. It mediates rapid entry or exit of water in response to abrupt changes in osmolarity. The protein is Aquaporin Z of Rhodopseudomonas palustris (strain ATCC BAA-98 / CGA009).